Consider the following 522-residue polypeptide: MKLRVRLQKRTWPLDMPEVEPTLGQLRAYLSQALPTWGYSSDARFAITLNNKDALTGDEETLASYGIVSGDLLCLILEDAIAAPNLPSSTVSEHSSVQNNDQPSLATSSSQSNIQDAQLHDSLQGQATQSEVWNDDSVSGPGQHFEAEAVPDVVDVEEGTGYYLAEPMLCSESVEGQVPHSLEILYQSADCLNPCDALIVSIHLLMLESGYIPQGTEAKAVSMPQNWRLGGVYKLQYTHPLCEGGSAALTCVPLGNLIVINATLKINSEVRSVKRLQLLPESFICKEESGENVAMIYKDLQKLSRLFKDQLVYPLLAFTRQALNLPDVFGLVVLPLELKLRIFRLLDVRSVLSLSAVCRDLCITSNDQLLWRCLYLRDFRDGSIRGRDTDWKELYKKRYKQRKEAQRGRHVMFLPSSPHPIPFYPSPLHPRPFPPSSLHPPGIIGGEYDQRLTLPYVGDPINSLIPGPGETPSQFPPLRPRFDPVGPLPGPNPILPGRGGPSDRFPLRPSRGWPTDSRLPFM.

Residues 1–87 (MKLRVRLQKR…EDAIAAPNLP (87 aa)) are ubiquitin-like. Polar residues predominate over residues 88-132 (SSTVSEHSSVQNNDQPSLATSSSQSNIQDAQLHDSLQGQATQSEV). The interval 88 to 151 (SSTVSEHSSV…GQHFEAEAVP (64 aa)) is disordered. The tract at residues 91-128 (VSEHSSVQNNDQPSLATSSSQSNIQDAQLHDSLQGQAT) is important for interaction with PINK1. The tract at residues 128 to 168 (TQSEVWNDDSVSGPGQHFEAEAVPDVVDVEEGTGYYLAEPM) is important for interaction with CDK6. Residues 179–323 (PHSLEILYQS…PLLAFTRQAL (145 aa)) are important for dimerization and interaction with PSMF1. Residues 328 to 374 (VFGLVVLPLELKLRIFRLLDVRSVLSLSAVCRDLCITSNDQLLWRCL) form the F-box domain. Positions 380–522 (RDGSIRGRDT…WPTDSRLPFM (143 aa)) are important for interaction with CDK6. Residues Arg431 and Arg451 each carry the omega-N-methylarginine modification. Residues 481-484 (RFDP) carry the RFDP motif motif. The interval 484–522 (PVGPLPGPNPILPGRGGPSDRFPLRPSRGWPTDSRLPFM) is disordered. The residue at position 518 (Arg518) is an Asymmetric dimethylarginine.

In terms of assembly, part of the SCF (SKP1-CUL1-F-box) E3 ubiquitin-protein ligase complex SCF(FBXO7) formed of CUL1, SKP1, RBX1 and FBXO7. Interacts via its C-terminal proline-rich region with DLGAP5. Interacts with BIRC2. Interacts with CDK6 and promotes its interaction with D-type cyclin. Interacts (via the N-terminal Ubl domain) with PRKN. Interacts (via N-terminal region) with PINK1. Interacts with PSMF1.

Its subcellular location is the cytoplasm. The protein resides in the nucleus. The protein localises to the mitochondrion. It is found in the cytosol. It functions in the pathway protein modification; protein ubiquitination. Functionally, substrate recognition component of a SCF (SKP1-CUL1-F-box protein) E3 ubiquitin-protein ligase complex which mediates the ubiquitination and subsequent proteasomal degradation of target proteins and plays a role in several biological processes such as cell cycle, cell proliferation, or maintenance of chromosome stability. Recognizes and ubiquitinates BIRC2 and the cell cycle regulator DLGAP5. Plays a role downstream of PINK1 in the clearance of damaged mitochondria via selective autophagy (mitophagy) by targeting PRKN to dysfunctional depolarized mitochondria. Promotes MFN1 ubiquitination. Mediates the ubiquitination and proteasomal degradation of UXT isoform 2, thereby impairing the NF-kappa-B signaling pathway. Inhibits NF-kappa-B pathway also by promoting the ubiquitinatioin of TRAF2. Affects the assembly state and activity of the proteasome in the cells including neurons by ubiquitinating the proteasomal subunit PSMA2 via 'Lys-63'-linked polyubiquitin chains. Promotes 'Lys-48'-linked polyubiquitination SIRT7, leading to the hydrogen peroxide-induced cell death. This Bos taurus (Bovine) protein is F-box only protein 7 (FBXO7).